A 367-amino-acid polypeptide reads, in one-letter code: Pectate lyase 1 (367 aa).

A signal peptide spans 1-21 (MASPCLIAVLVFLCAIVSCYS). Cys28 and Cys45 are disulfide-bonded. Residues 38–305 (NRMKLADCAV…YKKEVTKRIG (268 aa)) form a beta-helix region. Residues 92–104 (IFSQNMNIKLKMP) form an igE-binding. Binds to IgE in 5 out of 7 patients tested region. Cys128 and Cys147 are joined by a disulfide. An N-linked (GlcNAc...) asparagine glycan is attached at Asn148. Residue Asp170 coordinates Ca(2+). The N-linked (GlcNAc...) asparagine glycan is linked to Asn178. Ca(2+) is bound by residues Asp194 and Asp198. The segment at 239–250 (AFNQFGPNAGQR) is igE-binding. Binds to IgE in 6 out of 7 patients tested. The active site involves Arg250. An igE-binding. Binds to IgE in 5 out of 7 patients tested region spans residues 251–258 (MPRARYGL). Cys306 and Cys312 are joined by a disulfide. An igE-binding. Binds to IgE in 3 out of 7 patients tested region spans residues 317–327 (WRSTRDAFING).

It belongs to the polysaccharide lyase 1 family. Amb a subfamily. The cofactor is Ca(2+). In terms of processing, N-glycosylated; consists of complex-type N-glycans containing the Lewis a antigen (Galbeta1-3(Fucalpha1-4)GlcNAcbeta1-). As to expression, expressed in pollen (at protein level).

It catalyses the reaction Eliminative cleavage of (1-&gt;4)-alpha-D-galacturonan to give oligosaccharides with 4-deoxy-alpha-D-galact-4-enuronosyl groups at their non-reducing ends.. The protein operates within glycan metabolism; pectin degradation; 2-dehydro-3-deoxy-D-gluconate from pectin: step 2/5. Has low pectate lyase activity. The polypeptide is Pectate lyase 1 (Juniperus ashei (Ozark white cedar)).